The following is a 97-amino-acid chain: Sec-independent protein translocase protein TatA (97 aa).

A helical membrane pass occupies residues 1–21 (MGFNIWSLLIILLIVALLFGT). Residues 28-97 (GGDLGGAIRG…SAEHHDRSTS (70 aa)) form a disordered region. Residues 37 to 56 (GFKESMREGEEEEAQKRADG) show a composition bias toward basic and acidic residues. A compositionally biased stretch (low complexity) spans 78–87 (QARESSSARQ). A compositionally biased stretch (basic and acidic residues) spans 88–97 (SAEHHDRSTS).

The protein belongs to the TatA/E family. As to quaternary structure, the Tat system comprises two distinct complexes: a TatABC complex, containing multiple copies of TatA, TatB and TatC subunits, and a separate TatA complex, containing only TatA subunits. Substrates initially bind to the TatABC complex, which probably triggers association of the separate TatA complex to form the active translocon.

It is found in the cell inner membrane. Part of the twin-arginine translocation (Tat) system that transports large folded proteins containing a characteristic twin-arginine motif in their signal peptide across membranes. TatA could form the protein-conducting channel of the Tat system. This is Sec-independent protein translocase protein TatA from Halorhodospira halophila (strain DSM 244 / SL1) (Ectothiorhodospira halophila (strain DSM 244 / SL1)).